A 135-amino-acid chain; its full sequence is MDYKVKVRYLRIGRRKVARLLPFVKGEYVNHAISNLATMPQMSSVVLRKAIKSGIANAIFQSRNINPDTLWVKTAFVDKAPTLKRIRAASRGSADPILKRLSHITIILSDDKKPEKKKLKAKSAKTEEAPKAAEV.

Residues 112-135 (KKPEKKKLKAKSAKTEEAPKAAEV) are disordered. The segment covering 124 to 135 (AKTEEAPKAAEV) has biased composition (basic and acidic residues).

It belongs to the universal ribosomal protein uL22 family. Part of the 50S ribosomal subunit.

This protein binds specifically to 23S rRNA; its binding is stimulated by other ribosomal proteins, e.g. L4, L17, and L20. It is important during the early stages of 50S assembly. It makes multiple contacts with different domains of the 23S rRNA in the assembled 50S subunit and ribosome. Functionally, the globular domain of the protein is located near the polypeptide exit tunnel on the outside of the subunit, while an extended beta-hairpin is found that lines the wall of the exit tunnel in the center of the 70S ribosome. This Brachyspira hyodysenteriae (strain ATCC 49526 / WA1) protein is Large ribosomal subunit protein uL22.